The following is a 413-amino-acid chain: Alpha-1-antitrypsin 1-4 (413 aa).

Residues 1-24 (MTPSISWSLLLLAGLCCLVPSFLA) form the signal peptide. 3 N-linked (GlcNAc...) asparagine glycosylation sites follow: N64, N101, and N265. Residues 368–387 (AATVLQVATYSMPPIVRFDH) form an RCL region.

Belongs to the serpin family.

The protein resides in the secreted. Inhibitor of serine proteases. Can inhibit trypsin and chymotrypsin; relatively ineffective against elastase. The protein is Alpha-1-antitrypsin 1-4 (Serpina1d) of Mus musculus (Mouse).